We begin with the raw amino-acid sequence, 234 residues long: Large ribosomal subunit protein uL1 (234 aa).

The protein belongs to the universal ribosomal protein uL1 family. In terms of assembly, part of the 50S ribosomal subunit.

Its function is as follows. Binds directly to 23S rRNA. The L1 stalk is quite mobile in the ribosome, and is involved in E site tRNA release. In terms of biological role, protein L1 is also a translational repressor protein, it controls the translation of the L11 operon by binding to its mRNA. This Yersinia pseudotuberculosis serotype O:1b (strain IP 31758) protein is Large ribosomal subunit protein uL1.